The following is a 375-amino-acid chain: Alcohol dehydrogenase 1C (375 aa).

Position 2 is an N-acetylserine (Ser-2). Ser-23 carries the post-translational modification Phosphoserine. 7 residues coordinate Zn(2+): Cys-47, His-68, Cys-98, Cys-101, Cys-104, Cys-112, and Cys-175. NAD(+)-binding positions include 200 to 205 (GLGGVG), Asp-224, Lys-229, Ile-270, 293 to 295 (VGV), 318 to 320 (AIF), and Arg-370.

It belongs to the zinc-containing alcohol dehydrogenase family. Dimer of identical or non-identical chains of class I alcohol dehydrogenase: ADH1A, ADH1B, and ADH1C. The cofactor is Zn(2+).

The protein resides in the cytoplasm. It carries out the reaction a primary alcohol + NAD(+) = an aldehyde + NADH + H(+). The enzyme catalyses ethanol + NAD(+) = acetaldehyde + NADH + H(+). Functionally, alcohol dehydrogenase. Exhibits high activity for ethanol oxidation and plays a major role in ethanol catabolism. This chain is Alcohol dehydrogenase 1C (ADH1C), found in Homo sapiens (Human).